The following is a 90-amino-acid chain: Small ribosomal subunit protein bS20 (90 aa).

A disordered region spans residues 1-25 (MANSAQARKRARQAAKANSHNSALR).

The protein belongs to the bacterial ribosomal protein bS20 family.

Its function is as follows. Binds directly to 16S ribosomal RNA. This is Small ribosomal subunit protein bS20 from Burkholderia multivorans (strain ATCC 17616 / 249).